An 851-amino-acid polypeptide reads, in one-letter code: Alanine--tRNA ligase (851 aa).

His554, His558, Cys656, and His660 together coordinate Zn(2+).

This sequence belongs to the class-II aminoacyl-tRNA synthetase family. Zn(2+) is required as a cofactor.

The protein localises to the cytoplasm. It carries out the reaction tRNA(Ala) + L-alanine + ATP = L-alanyl-tRNA(Ala) + AMP + diphosphate. Functionally, catalyzes the attachment of alanine to tRNA(Ala) in a two-step reaction: alanine is first activated by ATP to form Ala-AMP and then transferred to the acceptor end of tRNA(Ala). Also edits incorrectly charged Ser-tRNA(Ala) and Gly-tRNA(Ala) via its editing domain. The chain is Alanine--tRNA ligase from Aliarcobacter butzleri (strain RM4018) (Arcobacter butzleri).